The chain runs to 169 residues: Vimentin-type intermediate filament-associated coiled-coil protein (169 aa).

Residues 7–89 (LQIREANAHL…VHSLQATVHQ (83 aa)) are a coiled coil. Positions 126-135 (RLGPLPASDP) are enriched in low complexity. The segment at 126–169 (RLGPLPASDPGHPPPGGPGPPLDNSTGEEADRDHLQPAVFGTTV) is disordered. Pro residues predominate over residues 136-146 (GHPPPGGPGPP).

The protein localises to the cytoplasm. This is Vimentin-type intermediate filament-associated coiled-coil protein (VMAC) from Homo sapiens (Human).